Here is a 1310-residue protein sequence, read N- to C-terminus: Cadherin-related family member 2 (1310 aa).

Residues 1 to 20 (MAQLWLSCFLLPALVVSVAA) form the signal peptide. The Extracellular portion of the chain corresponds to 21 to 1154 (NVAPKFLANM…ESDLSKQLIS (1134 aa)). 3 consecutive Cadherin domains span residues 27–124 (LANM…APVF), 125–241 (QNTA…DPQF), and 242–353 (VREF…KPEF). Residues Asn-29, Asn-134, Asn-182, Asn-188, Asn-195, Asn-300, Asn-355, Asn-371, Asn-401, Asn-460, Asn-565, Asn-600, Asn-616, Asn-632, Asn-680, Asn-696, Asn-701, Asn-775, Asn-821, Asn-871, Asn-877, Asn-911, Asn-932, and Asn-1107 are each glycosylated (N-linked (GlcNAc...) asparagine). Cadherin domains are found at residues 368–480 (AQVN…RPTF), 481–586 (PQSL…APVV), 586–695 (VSGS…LPIF), 696–808 (NQSS…PPTL), 810–928 (VASL…APYF), and 930–1058 (PENK…TPKE). The chain crosses the membrane as a helical span at residues 1155–1175 (VIIGLGVALLLVLVIMTMAFV). Residues 1176-1310 (CVRKSYNRKL…TNAGLDTTDL (135 aa)) are Cytoplasmic-facing. Positions 1180-1310 (SYNRKLQAMK…TNAGLDTTDL (131 aa)) are mediates interaction with USH1C and MYO7B and is required for proper localization to microvilli tips and function in microvilli organization. A Phosphoserine modification is found at Ser-1248. Positions 1259–1268 (NSQEIKEHRP) are enriched in basic and acidic residues. The tract at residues 1259-1310 (NSQEIKEHRPPHTPPEPDPEPLSVVLLGRQAGASGQLEGPSYTNAGLDTTDL) is disordered. Residue Ser-1299 is modified to Phosphoserine. Residues 1299–1310 (SYTNAGLDTTDL) are compositionally biased toward polar residues.

Part of the IMAC/intermicrovillar adhesion complex/intermicrovillar tip-link complex composed of ANKS4B, MYO7B, USH1C, CDHR2 and CDHR5. Interacts with MAST2. Interacts (via cytoplasmic domain) with USH1C and MYO7B; required for proper localization of CDHR2 to microvilli tips and its function in brush border differentiation. Highly expressed in liver, kidney and colon. Moderately expressed in small intestine. Down-regulated in a number of liver and colon cancers. Expressed in duodenum with higher expression in enterocytes along the villus axis and lower expression in crypts (at protein level).

The protein resides in the apical cell membrane. It is found in the cell projection. It localises to the microvillus membrane. Its subcellular location is the cell junction. Its function is as follows. Intermicrovillar adhesion molecule that forms, via its extracellular domain, calcium-dependent heterophilic complexes with CDHR5 on adjacent microvilli. Thereby, controls the packing of microvilli at the apical membrane of epithelial cells. Through its cytoplasmic domain, interacts with microvillus cytoplasmic proteins to form the intermicrovillar adhesion complex/IMAC. This complex plays a central role in microvilli and epithelial brush border differentiation. May also play a role in cell-cell adhesion and contact inhibition in epithelial cells. The chain is Cadherin-related family member 2 from Homo sapiens (Human).